Reading from the N-terminus, the 178-residue chain is Bifunctional protein PyrR (178 aa).

Residues 99-111 carry the PRPP-binding motif; it reads VVLVDDVIYTGRT.

This sequence belongs to the purine/pyrimidine phosphoribosyltransferase family. PyrR subfamily. As to quaternary structure, homodimer and homohexamer; in equilibrium.

The catalysed reaction is UMP + diphosphate = 5-phospho-alpha-D-ribose 1-diphosphate + uracil. Its function is as follows. Regulates transcriptional attenuation of the pyrimidine nucleotide (pyr) operon by binding in a uridine-dependent manner to specific sites on pyr mRNA. This disrupts an antiterminator hairpin in the RNA and favors formation of a downstream transcription terminator, leading to a reduced expression of downstream genes. Functionally, also displays a weak uracil phosphoribosyltransferase activity which is not physiologically significant. In Thermoanaerobacter pseudethanolicus (strain ATCC 33223 / 39E) (Clostridium thermohydrosulfuricum), this protein is Bifunctional protein PyrR.